The following is a 645-amino-acid chain: DNA mismatch repair protein MutL (645 aa).

Belongs to the DNA mismatch repair MutL/HexB family.

Functionally, this protein is involved in the repair of mismatches in DNA. It is required for dam-dependent methyl-directed DNA mismatch repair. May act as a 'molecular matchmaker', a protein that promotes the formation of a stable complex between two or more DNA-binding proteins in an ATP-dependent manner without itself being part of a final effector complex. This is DNA mismatch repair protein MutL from Geobacillus thermodenitrificans (strain NG80-2).